The sequence spans 505 residues: Maturase K (505 aa).

The protein belongs to the intron maturase 2 family. MatK subfamily.

It localises to the plastid. The protein localises to the chloroplast. Functionally, usually encoded in the trnK tRNA gene intron. Probably assists in splicing its own and other chloroplast group II introns. The protein is Maturase K of Chiococca alba (West Indian milkberry).